The sequence spans 65 residues: Small ribosomal subunit protein eS27 (65 aa).

The Zn(2+) site is built by Cys-21, Cys-24, Cys-40, and Cys-43. The C4-type zinc finger occupies 21 to 43; sequence CRDCGNVQVVFARPSSTVTCNIC.

This sequence belongs to the eukaryotic ribosomal protein eS27 family. In terms of assembly, part of the 30S ribosomal subunit. Requires Zn(2+) as cofactor.

This chain is Small ribosomal subunit protein eS27, found in Thermoplasma acidophilum (strain ATCC 25905 / DSM 1728 / JCM 9062 / NBRC 15155 / AMRC-C165).